A 227-amino-acid polypeptide reads, in one-letter code: Cytochrome c oxidase subunit 2 (227 aa).

The Mitochondrial intermembrane portion of the chain corresponds to 1 to 14 (MAHAAQVGLQDATS). A helical transmembrane segment spans residues 15–45 (PIMEELIIFHDHALMIIFLICFLVLYALFLT). The Mitochondrial matrix portion of the chain corresponds to 46–59 (LTTKLTSTNISDAQ). Residues 60–87 (EMETVWTILPAIILVLIALPSLRILYMT) traverse the membrane as a helical segment. At 88–227 (DEINDPSFTI…IFEMGPVFTL (140 aa)) the chain is on the mitochondrial intermembrane side. Residues His-161, Cys-196, Glu-198, Cys-200, His-204, and Met-207 each contribute to the Cu cation site. Glu-198 lines the Mg(2+) pocket.

The protein belongs to the cytochrome c oxidase subunit 2 family. In terms of assembly, component of the cytochrome c oxidase (complex IV, CIV), a multisubunit enzyme composed of 14 subunits. The complex is composed of a catalytic core of 3 subunits MT-CO1, MT-CO2 and MT-CO3, encoded in the mitochondrial DNA, and 11 supernumerary subunits COX4I, COX5A, COX5B, COX6A, COX6B, COX6C, COX7A, COX7B, COX7C, COX8 and NDUFA4, which are encoded in the nuclear genome. The complex exists as a monomer or a dimer and forms supercomplexes (SCs) in the inner mitochondrial membrane with NADH-ubiquinone oxidoreductase (complex I, CI) and ubiquinol-cytochrome c oxidoreductase (cytochrome b-c1 complex, complex III, CIII), resulting in different assemblies (supercomplex SCI(1)III(2)IV(1) and megacomplex MCI(2)III(2)IV(2)). Found in a complex with TMEM177, COA6, COX18, COX20, SCO1 and SCO2. Interacts with TMEM177 in a COX20-dependent manner. Interacts with COX20. Interacts with COX16. Requires Cu cation as cofactor.

Its subcellular location is the mitochondrion inner membrane. The catalysed reaction is 4 Fe(II)-[cytochrome c] + O2 + 8 H(+)(in) = 4 Fe(III)-[cytochrome c] + 2 H2O + 4 H(+)(out). Functionally, component of the cytochrome c oxidase, the last enzyme in the mitochondrial electron transport chain which drives oxidative phosphorylation. The respiratory chain contains 3 multisubunit complexes succinate dehydrogenase (complex II, CII), ubiquinol-cytochrome c oxidoreductase (cytochrome b-c1 complex, complex III, CIII) and cytochrome c oxidase (complex IV, CIV), that cooperate to transfer electrons derived from NADH and succinate to molecular oxygen, creating an electrochemical gradient over the inner membrane that drives transmembrane transport and the ATP synthase. Cytochrome c oxidase is the component of the respiratory chain that catalyzes the reduction of oxygen to water. Electrons originating from reduced cytochrome c in the intermembrane space (IMS) are transferred via the dinuclear copper A center (CU(A)) of subunit 2 and heme A of subunit 1 to the active site in subunit 1, a binuclear center (BNC) formed by heme A3 and copper B (CU(B)). The BNC reduces molecular oxygen to 2 water molecules using 4 electrons from cytochrome c in the IMS and 4 protons from the mitochondrial matrix. The protein is Cytochrome c oxidase subunit 2 (MT-CO2) of Gorilla gorilla beringei (Mountain gorilla).